A 258-amino-acid polypeptide reads, in one-letter code: MAVNVYSTSVTSDNLSRHDMLAWINESLQLTLTKIEQLCSGAAYCQFMDMLFPGSVALKKVKFQAKLEHEYIQNFKVLQAGFKRMGVDKIIPVDKLVKGKFQDNFEFVQWFKKFFDANYDGKEYDPVAARQGQETVAPNLVAPVVNKPKKPLAPQRPIVAQRTPATPKGSTGMVKKAAGDDESAGLIEQINVLKLTVEDLEKERDFYFGKLRNIELICQENEGENDPVLQRIVEILYATDEGFVIPDEGAPQEEQEEY.

A Calponin-homology (CH) domain is found at 14–116 (NLSRHDMLAW…FVQWFKKFFD (103 aa)). The EB1 C-terminal domain maps to 175–245 (KKAAGDDESA…LYATDEGFVI (71 aa)).

The protein belongs to the MAPRE family.

Its subcellular location is the cytoplasm. It is found in the cytoskeleton. It localises to the microtubule organizing center. The protein localises to the centrosome. The protein resides in the golgi apparatus. Its subcellular location is the spindle. It is found in the spindle pole. In terms of biological role, plus-end tracking protein (+TIP) that binds to the plus-end of microtubules and regulates the dynamics of the microtubule cytoskeleton. Promotes cytoplasmic microtubule nucleation and elongation. Involved in mitotic spindle positioning by stabilizing microtubules and promoting dynamic connection between astral microtubules and the cortex during mitotic chromosome segregation. This Gallus gallus (Chicken) protein is Microtubule-associated protein RP/EB family member 1 (MAPRE1).